The following is a 663-amino-acid chain: Meiotically up-regulated gene 60 protein (663 aa).

Residues 578-644 (PAEMHFYVPE…SENLWAVRSL (67 aa)) form the KH domain.

It is found in the cytoplasm. The protein resides in the nucleus. Its subcellular location is the cytoskeleton. The protein localises to the microtubule organizing center. It localises to the spindle pole body. Has a role in meiosis. The polypeptide is Meiotically up-regulated gene 60 protein (mug60) (Schizosaccharomyces pombe (strain 972 / ATCC 24843) (Fission yeast)).